The sequence spans 170 residues: uncharacterized protein (170 aa).

Over Met1–Ser15 the chain is Cytoplasmic. Residues Leu16 to Ala36 form a helical membrane-spanning segment. Residues Ser37–Ser76 lie on the Extracellular side of the membrane. The chain crosses the membrane as a helical span at residues Leu77–Ser97. At Arg98–Ala119 the chain is on the cytoplasmic side. Residues Val120–Leu140 form a helical membrane-spanning segment. At Pro141 to Leu170 the chain is on the extracellular side.

The protein localises to the membrane. This is an uncharacterized protein from Saccharomyces cerevisiae (strain ATCC 204508 / S288c) (Baker's yeast).